A 1551-amino-acid polypeptide reads, in one-letter code: Dual oxidase 1 (1551 aa).

A signal peptide spans methionine 1–alanine 21. The Extracellular portion of the chain corresponds to glutamine 22–glycine 596. The segment at serine 26–phenylalanine 593 is peroxidase-like; mediates peroxidase activity. Residue asparagine 94 is glycosylated (N-linked (GlcNAc...) asparagine). Positions arginine 150–tryptophan 172 are disordered. N-linked (GlcNAc...) asparagine glycans are attached at residues asparagine 342, asparagine 354, asparagine 461, and asparagine 534. A helical transmembrane segment spans residues valine 597–alanine 617. Residues arginine 618–histidine 1044 are Cytoplasmic-facing. EF-hand domains are found at residues proline 815 to glycine 850, serine 851 to isoleucine 886, and glutamine 895 to glutamate 930. Positions 828, 830, 832, 834, 839, 864, 866, 868, and 875 each coordinate Ca(2+). Positions tyrosine 956–arginine 1248 are interaction with TXNDC11. Residues isoleucine 1045–tyrosine 1065 traverse the membrane as a helical segment. At tyrosine 1066–arginine 1080 the chain is on the extracellular side. A helical membrane pass occupies residues valine 1081–leucine 1101. Positions arginine 1087–serine 1269 constitute a Ferric oxidoreductase domain. The Cytoplasmic segment spans residues leucine 1102–histidine 1148. The helical transmembrane segment at valine 1149 to phenylalanine 1171 threads the bilayer. Topologically, residues histidine 1172–glutamine 1188 are extracellular. The helical transmembrane segment at threonine 1189 to alanine 1209 threads the bilayer. The Cytoplasmic portion of the chain corresponds to serine 1210–histidine 1226. A helical transmembrane segment spans residues leucine 1227 to proline 1247. Residue arginine 1248 is a topological domain, extracellular. The chain crosses the membrane as a helical span at residues phenylalanine 1249 to serine 1269. In terms of domain architecture, FAD-binding FR-type spans arginine 1270–glutamate 1376. Over arginine 1270 to phenylalanine 1551 the chain is Cytoplasmic.

In the N-terminal section; belongs to the peroxidase family. Interacts with TXNDC11, TPO and CYBA. N-glycosylated. In terms of tissue distribution, expressed in thyrocytes and tracheal surface epithelial cells (at protein level). Expressed in thyroid, trachea, bronchium, and to a lower extent, in placenta, testis, prostate, pancreas and heart.

Its subcellular location is the apical cell membrane. The catalysed reaction is NADH + O2 + H(+) = H2O2 + NAD(+). It carries out the reaction NADPH + O2 + H(+) = H2O2 + NADP(+). The protein operates within hormone biosynthesis; thyroid hormone biosynthesis. With respect to regulation, the NADPH oxidase activity is calcium-dependent. Peroxidase activity is inhibited by aminobenzohydrazide. In terms of biological role, generates hydrogen peroxide which is required for the activity of thyroid peroxidase/TPO and lactoperoxidase/LPO. Plays a role in thyroid hormones synthesis and lactoperoxidase-mediated antimicrobial defense at the surface of mucosa. May have its own peroxidase activity through its N-terminal peroxidase-like domain. The polypeptide is Dual oxidase 1 (DUOX1) (Homo sapiens (Human)).